Reading from the N-terminus, the 595-residue chain is UvrABC system protein C (595 aa).

The GIY-YIG domain occupies 14-91 (SNPGCYLHKD…IQENMPKFNI (78 aa)). Positions 196–231 (DKIVNQLKAKMKDMSDQMEFERAAEYRDLIEAVSTL) constitute a UVR domain.

It belongs to the UvrC family. Interacts with UvrB in an incision complex.

It localises to the cytoplasm. Functionally, the UvrABC repair system catalyzes the recognition and processing of DNA lesions. UvrC both incises the 5' and 3' sides of the lesion. The N-terminal half is responsible for the 3' incision and the C-terminal half is responsible for the 5' incision. The protein is UvrABC system protein C of Streptococcus thermophilus (strain CNRZ 1066).